Here is a 950-residue protein sequence, read N- to C-terminus: Glycine dehydrogenase (decarboxylating) (950 aa).

Lys-698 carries the post-translational modification N6-(pyridoxal phosphate)lysine.

Belongs to the GcvP family. As to quaternary structure, the glycine cleavage system is composed of four proteins: P, T, L and H. It depends on pyridoxal 5'-phosphate as a cofactor.

It carries out the reaction N(6)-[(R)-lipoyl]-L-lysyl-[glycine-cleavage complex H protein] + glycine + H(+) = N(6)-[(R)-S(8)-aminomethyldihydrolipoyl]-L-lysyl-[glycine-cleavage complex H protein] + CO2. Its function is as follows. The glycine cleavage system catalyzes the degradation of glycine. The P protein binds the alpha-amino group of glycine through its pyridoxal phosphate cofactor; CO(2) is released and the remaining methylamine moiety is then transferred to the lipoamide cofactor of the H protein. This Neisseria gonorrhoeae (strain ATCC 700825 / FA 1090) protein is Glycine dehydrogenase (decarboxylating).